The following is a 1594-amino-acid chain: NAD-specific glutamate dehydrogenase (1594 aa).

Residue K816 is part of the active site.

This sequence belongs to the Glu/Leu/Phe/Val dehydrogenases family. As to quaternary structure, interacts with (unphosphorylated) GarA.

The catalysed reaction is L-glutamate + NAD(+) + H2O = 2-oxoglutarate + NH4(+) + NADH + H(+). Its activity is regulated as follows. Activity is inhibited by unphosphorylated GarA. Stimulated by manganese and magnesium. Catalyzes the reversible conversion of L-glutamate to 2-oxoglutarate. Highly specific for NAD. This is NAD-specific glutamate dehydrogenase (gdh) from Mycolicibacterium smegmatis (strain ATCC 700084 / mc(2)155) (Mycobacterium smegmatis).